The chain runs to 198 residues: Sporulation cortex protein CoxA (198 aa).

An N-terminal signal peptide occupies residues 1-21 (MGKKMTIASLILMTAGLTACG). Positions 91 to 115 (PLATDGTYNNTNNRNMNRNAANNGY) are disordered. Over residues 95 to 115 (DGTYNNTNNRNMNRNAANNGY) the composition is skewed to low complexity.

It localises to the spore cortex. The protein is Sporulation cortex protein CoxA (coxA) of Bacillus subtilis (strain 168).